We begin with the raw amino-acid sequence, 142 residues long: Nucleoside diphosphate kinase (142 aa).

Lys-11, Phe-59, Arg-87, Thr-93, Arg-104, and Asn-114 together coordinate ATP. The Pros-phosphohistidine intermediate role is filled by His-117.

This sequence belongs to the NDK family. In terms of assembly, homotetramer. It depends on Mg(2+) as a cofactor.

The protein localises to the cytoplasm. The catalysed reaction is a 2'-deoxyribonucleoside 5'-diphosphate + ATP = a 2'-deoxyribonucleoside 5'-triphosphate + ADP. It catalyses the reaction a ribonucleoside 5'-diphosphate + ATP = a ribonucleoside 5'-triphosphate + ADP. In terms of biological role, major role in the synthesis of nucleoside triphosphates other than ATP. The ATP gamma phosphate is transferred to the NDP beta phosphate via a ping-pong mechanism, using a phosphorylated active-site intermediate. The polypeptide is Nucleoside diphosphate kinase (Pectobacterium atrosepticum (strain SCRI 1043 / ATCC BAA-672) (Erwinia carotovora subsp. atroseptica)).